Consider the following 244-residue polypeptide: Gasdermin-like protein rcd-1-2 (244 aa).

The tract at residues 1–22 is disordered; sequence MDNEEWFPLKQTHYPPPTIPSM.

The protein belongs to the gasdermin family. In terms of assembly, heterooligomer; the heterooligomer with rcd-1-1 forms a ring-shaped pore complex when inserted in the membrane.

The protein resides in the cytoplasm. It localises to the cell membrane. Gasdermin-like protein involved in heterokaryon incompatibility, a process that ensures that during spontaneous vegetative cell fusion, only compatible cells from the same colony survive (non-self-recognition). In N.crassa, the rcd-1 locus exists as 2 incompatible alleles, rcd-1-1 (AC Q7SBA0) and rcd-1-2 (this entry). During the allorecognition process, forms a heterooligomer with rcd-1-1, thereby forming a functional gasdermin-like complex that binds to membranes and forms pores, triggering cell death. Binds negatively charged phospholipids, such as cardiolipin and phosphatidylserine. Also binds to phosphoinositides, preferentially to phosphatidylinositol-3-phosphate (PtdIns-3-P), PtdIns-5-P and PtdIns-3,5-P2. This chain is Gasdermin-like protein rcd-1-2, found in Neurospora crassa.